The sequence spans 737 residues: Catalase-peroxidase (737 aa).

Positions 102-225 form a cross-link, tryptophyl-tyrosyl-methioninium (Trp-Tyr) (with M-251); sequence WHSAGTYRTG…LGAVQMGLIY (124 aa). Histidine 103 serves as the catalytic Proton acceptor. The tryptophyl-tyrosyl-methioninium (Tyr-Met) (with W-102) cross-link spans 225–251; the sequence is YVNPEGPNGKPDPLAAAHDIRETFARM. Histidine 266 contacts heme b.

This sequence belongs to the peroxidase family. Peroxidase/catalase subfamily. Homodimer or homotetramer. It depends on heme b as a cofactor. Post-translationally, formation of the three residue Trp-Tyr-Met cross-link is important for the catalase, but not the peroxidase activity of the enzyme.

The catalysed reaction is H2O2 + AH2 = A + 2 H2O. It catalyses the reaction 2 H2O2 = O2 + 2 H2O. Its function is as follows. Bifunctional enzyme with both catalase and broad-spectrum peroxidase activity. This is Catalase-peroxidase from Caulobacter sp. (strain K31).